Reading from the N-terminus, the 510-residue chain is ATP synthase subunit alpha (510 aa).

G170–T177 lines the ATP pocket.

This sequence belongs to the ATPase alpha/beta chains family. As to quaternary structure, F-type ATPases have 2 components, CF(1) - the catalytic core - and CF(0) - the membrane proton channel. CF(1) has five subunits: alpha(3), beta(3), gamma(1), delta(1), epsilon(1). CF(0) has three main subunits: a(1), b(2) and c(9-12). The alpha and beta chains form an alternating ring which encloses part of the gamma chain. CF(1) is attached to CF(0) by a central stalk formed by the gamma and epsilon chains, while a peripheral stalk is formed by the delta and b chains.

It is found in the cell inner membrane. It catalyses the reaction ATP + H2O + 4 H(+)(in) = ADP + phosphate + 5 H(+)(out). Produces ATP from ADP in the presence of a proton gradient across the membrane. The alpha chain is a regulatory subunit. This Caulobacter sp. (strain K31) protein is ATP synthase subunit alpha.